Here is a 475-residue protein sequence, read N- to C-terminus: 3-isopropylmalate dehydratase large subunit (475 aa).

Positions 353, 414, and 417 each coordinate [4Fe-4S] cluster.

This sequence belongs to the aconitase/IPM isomerase family. LeuC type 1 subfamily. In terms of assembly, heterodimer of LeuC and LeuD. It depends on [4Fe-4S] cluster as a cofactor.

The catalysed reaction is (2R,3S)-3-isopropylmalate = (2S)-2-isopropylmalate. The protein operates within amino-acid biosynthesis; L-leucine biosynthesis; L-leucine from 3-methyl-2-oxobutanoate: step 2/4. Catalyzes the isomerization between 2-isopropylmalate and 3-isopropylmalate, via the formation of 2-isopropylmaleate. This Stutzerimonas stutzeri (strain A1501) (Pseudomonas stutzeri) protein is 3-isopropylmalate dehydratase large subunit.